We begin with the raw amino-acid sequence, 252 residues long: Probable truncated L-gulonolactone oxidase 7, mitochondrial (252 aa).

The transit peptide at 1 to 102 (MKRSMRSHLA…ELNYGVLVRY (102 aa)) directs the protein to the mitochondrion.

This sequence belongs to the oxygen-dependent FAD-linked oxidoreductase family.

Its subcellular location is the mitochondrion. It catalyses the reaction L-gulono-1,4-lactone + O2 = L-ascorbate + H2O2 + H(+). Its pathway is cofactor biosynthesis; L-ascorbate biosynthesis. In terms of biological role, may be involved in the biosynthesis of ascorbic acid. In Arabidopsis thaliana (Mouse-ear cress), this protein is Probable truncated L-gulonolactone oxidase 7, mitochondrial.